Reading from the N-terminus, the 247-residue chain is UPF0309 protein Lm4b_02611 (247 aa).

One can recognise an SIS domain in the interval 31 to 214 (VAESIENDGV…ETMVNDNFTP (184 aa)).

The protein belongs to the UPF0309 family.

This chain is UPF0309 protein Lm4b_02611, found in Listeria monocytogenes serotype 4b (strain CLIP80459).